The primary structure comprises 136 residues: Large ribosomal subunit protein uL16c (136 aa).

The protein belongs to the universal ribosomal protein uL16 family. Part of the 50S ribosomal subunit.

It is found in the plastid. Its subcellular location is the chloroplast. In Buxus microphylla (Littleleaf boxwood), this protein is Large ribosomal subunit protein uL16c.